Here is a 266-residue protein sequence, read N- to C-terminus: Non-structural maintenance of chromosomes element 1 homolog (266 aa).

The segment at 1–102 (MQGSTRRAGA…SVSKMATDFA (102 aa)) is interaction with NSMCE3. An RING-type; atypical zinc finger spans residues 191 to 232 (CNICHGLLIQGQSCETCGIRMHLPCVAKYFQSIPEPHCPHCN). A disordered region spans residues 246–266 (EKEREAGISKSSRKSLRTRQH). Basic residues predominate over residues 256-266 (SSRKSLRTRQH).

This sequence belongs to the NSE1 family. As to quaternary structure, component of the SMC5-SMC6 complex which consists at least of SMC5, SMC6, NSMCE2, NSMCE1, NSMCE4A or EID3 and NSMCE3. NSMCE1, NSMCE4A or EID3 and NSMCE3 probably form a subcomplex that bridges the head domains of the SMC5-SMC6 heterodimer. Interacts with NSMCE3. Post-translationally, ubiquitinated.

The protein localises to the nucleus. It is found in the chromosome. The protein resides in the telomere. The catalysed reaction is S-ubiquitinyl-[E2 ubiquitin-conjugating enzyme]-L-cysteine + [acceptor protein]-L-lysine = [E2 ubiquitin-conjugating enzyme]-L-cysteine + N(6)-ubiquitinyl-[acceptor protein]-L-lysine.. In terms of biological role, RING-type zinc finger-containing E3 ubiquitin ligase that assembles with melanoma antigen protein (MAGE) to catalyze the direct transfer of ubiquitin from E2 ubiquitin-conjugating enzyme to a specific substrate. Within MAGE-RING ubiquitin ligase complex, MAGE stimulates and specifies ubiquitin ligase activity likely through recruitment and/or stabilization of the E2 ubiquitin-conjugating enzyme at the E3:substrate complex. Involved in maintenance of genome integrity, DNA damage response and DNA repair. NSMCE3/MAGEG1 and NSMCE1 ubiquitin ligase are components of SMC5-SMC6 complex and may positively regulate homologous recombination-mediated DNA repair. The chain is Non-structural maintenance of chromosomes element 1 homolog (Nsmce1) from Mus musculus (Mouse).